We begin with the raw amino-acid sequence, 366 residues long: Ribosomal RNA large subunit methyltransferase M (366 aa).

Residues serine 188, 221-224, aspartate 240, aspartate 260, and aspartate 277 contribute to the S-adenosyl-L-methionine site; that span reads CPGG. The Proton acceptor role is filled by lysine 306.

It belongs to the class I-like SAM-binding methyltransferase superfamily. RNA methyltransferase RlmE family. RlmM subfamily. As to quaternary structure, monomer.

The protein resides in the cytoplasm. It carries out the reaction cytidine(2498) in 23S rRNA + S-adenosyl-L-methionine = 2'-O-methylcytidine(2498) in 23S rRNA + S-adenosyl-L-homocysteine + H(+). Its function is as follows. Catalyzes the 2'-O-methylation at nucleotide C2498 in 23S rRNA. This chain is Ribosomal RNA large subunit methyltransferase M, found in Citrobacter koseri (strain ATCC BAA-895 / CDC 4225-83 / SGSC4696).